Here is a 100-residue protein sequence, read N- to C-terminus: Large ribosomal subunit protein uL23 (100 aa).

It belongs to the universal ribosomal protein uL23 family. Part of the 50S ribosomal subunit. Contacts protein L29, and trigger factor when it is bound to the ribosome.

One of the early assembly proteins it binds 23S rRNA. One of the proteins that surrounds the polypeptide exit tunnel on the outside of the ribosome. Forms the main docking site for trigger factor binding to the ribosome. This Shewanella denitrificans (strain OS217 / ATCC BAA-1090 / DSM 15013) protein is Large ribosomal subunit protein uL23.